Here is a 202-residue protein sequence, read N- to C-terminus: Matrix protein (202 aa).

The disordered stretch occupies residues 14–33 (EDTQKPSPASAPPDGDDLWL). Positions 35–38 (PPEY) match the PPXY motif motif. An essential for glycoprotein binding region spans residues 115 to 151 (KLRRTLIFQWADSRGPLEGEELEHSQEITWDDDTEFV).

Belongs to the lyssavirus matrix protein family. As to quaternary structure, homomultimer. Interacts with nucleoprotein and with the cytoplasmic domain of glycoprotein. Interacts with host ATP6V1A; this interaction plays an important role in virion uncoating after viral entry.

Its subcellular location is the virion membrane. It localises to the host endomembrane system. The protein localises to the host cytoplasm. In terms of biological role, plays a major role in assembly, budding and uncoating of virion after membrane fusion. Completely covers the ribonucleoprotein coil and keep it in condensed bullet-shaped form. Inhibits viral transcription and stimulates replication. Plays a major role in early induction of TRAIL-mediated apoptosis in infected neurons. Inhibits the integrated stress response (ISR) in the infected cell by blocking the formation of stress granules. This Rabies virus (strain HEP-Flury) (RABV) protein is Matrix protein (M).